The sequence spans 253 residues: Phosphate import ATP-binding protein PstB (253 aa).

Residues 7 to 248 form the ABC transporter domain; sequence IDARDVNFWY…PEKEATQNYI (242 aa). Residue 39–46 participates in ATP binding; that stretch reads GPSGCGKS.

It belongs to the ABC transporter superfamily. Phosphate importer (TC 3.A.1.7) family. As to quaternary structure, the complex is composed of two ATP-binding proteins (PstB), two transmembrane proteins (PstC and PstA) and a solute-binding protein (PstS).

It is found in the cell inner membrane. It carries out the reaction phosphate(out) + ATP + H2O = ADP + 2 phosphate(in) + H(+). Its function is as follows. Part of the ABC transporter complex PstSACB involved in phosphate import. Responsible for energy coupling to the transport system. In Bacteroides fragilis (strain ATCC 25285 / DSM 2151 / CCUG 4856 / JCM 11019 / LMG 10263 / NCTC 9343 / Onslow / VPI 2553 / EN-2), this protein is Phosphate import ATP-binding protein PstB.